A 464-amino-acid polypeptide reads, in one-letter code: Tyrosine--tRNA ligase, mitochondrial (464 aa).

Tyr61 lines the L-tyrosine pocket. An ATP-binding site is contributed by Asp65. The 'HIGH' region signature appears at 66 to 75; that stretch reads PTADSLHVGN. L-tyrosine-binding residues include Asp105, Tyr209, Gln213, Asp216, and Gln235. The 'KMSKS' region motif lies at 270 to 274; it reads KFGKS. ATP is bound at residue Lys273.

This sequence belongs to the class-I aminoacyl-tRNA synthetase family. Homodimer.

It localises to the mitochondrion matrix. It catalyses the reaction tRNA(Tyr) + L-tyrosine + ATP = L-tyrosyl-tRNA(Tyr) + AMP + diphosphate + H(+). Catalyzes the attachment of tyrosine to tRNA(Tyr) in a two-step reaction: tyrosine is first activated by ATP to form Tyr-AMP and then transferred to the acceptor end of tRNA(Tyr). The polypeptide is Tyrosine--tRNA ligase, mitochondrial (Drosophila melanogaster (Fruit fly)).